The following is a 554-amino-acid chain: RGIFRPDRSHAKSARSVAETMGNYHPHGDASIYDTLVRMAQPWSLRYPLVDGQGNFGSPGNDPPAAMRYCVTGDALVRLPFGQSVRLRDVVAGARSSSDNAIDLKVLNRHGDPVVADKLFHSGEHETYTVRTAEGYEVTGTANHPLLCLVDVGGVPTLLWKLTEEIRPGDHVVLQRTPPTEFGPADWQDAFEALHLGAFISEGFVSENRAGFNNLDREFFNAVLTAYDTIVGGPRYVSSRTIASDSLLHELDVHNLTALKKSRLGELVGQRSADKAVPEWLWKAPAVVKRVFLQALFEGDGSCSALPRNTIQVSYSTRSGRLAKDIQQMLLEFGVISRRYVHATGEHKVVLTSRAQAELFAAQIGFGGIKQAKLQGLLDALPQAAAGRDGDYVPGLAQFVRKHSGSRWVDKDWLNRHNIDRLSRWQRDGAEILGRIADPDVRAIAQELTDGRFYYARVASVTDSGVQPVYSLRVDTDDHSFITNGFVSHNTEARLTPLAMEMLREIDEETVDFIPNYDGRVQEPTVLPSRFPNLLANGSGGIAVGMATNIPPHN.

Residues 1 to 554 enclose the Topo IIA-type catalytic domain; the sequence is RGIFRPDRSH…GMATNIPPHN (554 aa). Residue Tyr-69 is the O-(5'-phospho-DNA)-tyrosine intermediate of the active site. The DOD-type homing endonuclease domain occupies 195–335; sequence HLGAFISEGF…IQQMLLEFGV (141 aa).

This sequence belongs to the type II topoisomerase GyrA/ParC subunit family. In terms of assembly, heterotetramer, composed of two GyrA and two GyrB chains. In the heterotetramer, GyrA contains the active site tyrosine that forms a transient covalent intermediate with DNA, while GyrB binds cofactors and catalyzes ATP hydrolysis. Post-translationally, this protein undergoes a protein self splicing that involves a post-translational excision of the intervening region (intein) followed by peptide ligation.

It localises to the cytoplasm. The enzyme catalyses ATP-dependent breakage, passage and rejoining of double-stranded DNA.. Functionally, a type II topoisomerase that negatively supercoils closed circular double-stranded (ds) DNA in an ATP-dependent manner to modulate DNA topology and maintain chromosomes in an underwound state. Negative supercoiling favors strand separation, and DNA replication, transcription, recombination and repair, all of which involve strand separation. Also able to catalyze the interconversion of other topological isomers of dsDNA rings, including catenanes and knotted rings. Type II topoisomerases break and join 2 DNA strands simultaneously in an ATP-dependent manner. This chain is DNA gyrase subunit A (gyrA), found in Mycolicibacterium flavescens (Mycobacterium flavescens).